The following is a 220-amino-acid chain: Aspartic protease inhibitor 4 (220 aa).

The first 23 residues, 1-23, serve as a signal peptide directing secretion; it reads MMKCLFLLCLCLLPILVFSSTFT. Residues 24–32 constitute a propeptide that is removed on maturation; sequence SQNPINLPS. A Vacuolar targeting signal motif is present at residues 26–31; it reads NPINLP. Asn-51 is a glycosylation site (N-linked (GlcNAc...) asparagine). 2 cysteine pairs are disulfide-bonded: Cys-80–Cys-125 and Cys-174–Cys-185.

Belongs to the protease inhibitor I3 (leguminous Kunitz-type inhibitor) family. Tubers.

The protein localises to the vacuole. Functionally, inhibits tightly cathepsin D (aspartic protease) and weakly trypsin (serine protease). May protect the plant by inhibiting proteases of invading organisms. The protein is Aspartic protease inhibitor 4 of Solanum tuberosum (Potato).